We begin with the raw amino-acid sequence, 364 residues long: Developmentally-regulated GTP-binding protein 2 (364 aa).

A (3S)-3-hydroxylysine modification is found at K21. In terms of domain architecture, OBG-type G spans 63 to 288 (ARVALIGFPS…LLEMLWEYLA (226 aa)). GTP contacts are provided by residues 69–76 (GFPSVGKS), 94–98 (FTTLT), 115–118 (DLPG), 246–249 (NKID), and 269–271 (SCG). Mg(2+) is bound by residues S76 and T96. Positions 288–363 (ALTCIYTKKR…EHEDVIQIVK (76 aa)) constitute a TGS domain.

This sequence belongs to the TRAFAC class OBG-HflX-like GTPase superfamily. OBG GTPase family. As to quaternary structure, interacts with RWDD1; this interaction confers protection to polyubiquitination and proteolytic degradation. Interacts with JMJD7; this interaction is direct. Requires Mg(2+) as cofactor. Post-translationally, polyubiquitinated. Hydroxylated (with S stereochemistry) at C-3 of Lys-21 by JMJD7. Fairly high levels in liver, heart, kidney, and brain. Very low levels in lung, spleen, testis and skeletal muscle.

It localises to the nucleus. The protein resides in the cytoplasm. It carries out the reaction GTP + H2O = GDP + phosphate + H(+). In terms of biological role, catalyzes the conversion of GTP to GDP through hydrolysis of the gamma-phosphate bond in GTP. When hydroxylated at C-3 of 'Lys-21' by JMJD7, may bind to RNA and play a role in translation. The protein is Developmentally-regulated GTP-binding protein 2 (Drg2) of Mus musculus (Mouse).